The chain runs to 240 residues: Protein shisa-5 (240 aa).

The N-terminal stretch at 1-28 (MTAPVPAPRILLPLLLLLLLTPPPGARG) is a signal peptide. At 29 to 105 (EVCMASRGLS…RPGYNDPMSG (77 aa)) the chain is on the extracellular side. The helical transmembrane segment at 106 to 126 (FGATLAVGLTIFVLSVVTIII) threads the bilayer. Residues 127 to 240 (CFTCSCCCLY…AYMDAPKAAL (114 aa)) lie on the Cytoplasmic side of the membrane.

Belongs to the shisa family. As to quaternary structure, interacts with PDCD6; PDCD6 can stabilize SHISA5.

Its subcellular location is the endoplasmic reticulum membrane. It is found in the nucleus membrane. Its function is as follows. Can induce apoptosis in a caspase-dependent manner and plays a role in p53/TP53-dependent apoptosis. The polypeptide is Protein shisa-5 (SHISA5) (Homo sapiens (Human)).